The following is a 536-amino-acid chain: Mitogen-activated protein kinase kinase kinase mom-4 (536 aa).

Residues 1–20 show a composition bias toward low complexity; that stretch reads MDNSSQSKPSSSSSSHSPSP. A disordered region spans residues 1–34; the sequence is MDNSSQSKPSSSSSSHSPSPAAITPTQRTTRDSG. The Protein kinase domain maps to 51–305; the sequence is NLNSHYLGKG…SSECVEYFTL (255 aa). ATP-binding positions include 57–65 and Lys84; that span reads LGKGTYGLV. The Proton acceptor role is filled by Asp176. Residues 314–438 are disordered; that stretch reads SVPLSDSSTN…EHRRDSNDEE (125 aa). Polar residues-rich tracts occupy residues 315–325 and 350–366; these read VPLSDSSTNGP and NNRT…QQPG. Over residues 405–438 the composition is skewed to basic and acidic residues; the sequence is KNFRDRAKSEQRQPHRDARPPPPFEHRRDSNDEE.

It belongs to the protein kinase superfamily. STE Ser/Thr protein kinase family. MAP kinase kinase kinase subfamily. In terms of assembly, interacts with, and is activated by, tap-1. The cofactor is Mg(2+). In terms of processing, may be autophosphorylated.

It carries out the reaction L-seryl-[protein] + ATP = O-phospho-L-seryl-[protein] + ADP + H(+). The catalysed reaction is L-threonyl-[protein] + ATP = O-phospho-L-threonyl-[protein] + ADP + H(+). Functionally, part of the Wnt signaling pathway essential for the specification of the mesodermal cell fate in early embryos. Stimulates the wrm-1/lit-1-dependent phosphorylation of pop-1 and plays a role in the initial nuclear accumulation of wrm-1. The sequence is that of Mitogen-activated protein kinase kinase kinase mom-4 from Caenorhabditis elegans.